The chain runs to 366 residues: Cyclic amide hydrolase (366 aa).

Residues 1 to 103 are RU A; sequence MKVGVHKLAM…TLFTRAPDDG (103 aa). Residues Arg51 and 82–83 each bind substrate; that span reads SG. Residues 110 to 247 are RU B; sequence RLALGIGITR…CEVLLFGNAP (138 aa). Lys160 is an active-site residue. Substrate-binding positions include Arg192, 230–231, Arg327, and 346–347; these read SA and SG. Ser230 functions as the Nucleophile in the catalytic mechanism. Residues 253 to 366 are RU C; the sequence is FRIGHGVLKD…AAPIAAIVRA (114 aa).

Belongs to the cyclic amide hydrolase (CyAH) family. As to quaternary structure, homotetramer.

Cyclic amide hydrolase of unknown substrate specificity. Catalyzes the hydrolytic ring-opening of a cyclic amide. Does not act on cyanuric acid nor barbituric acid. This chain is Cyclic amide hydrolase, found in Azorhizobium caulinodans (strain ATCC 43989 / DSM 5975 / JCM 20966 / LMG 6465 / NBRC 14845 / NCIMB 13405 / ORS 571).